Consider the following 414-residue polypeptide: Histidine--tRNA ligase (414 aa).

The protein belongs to the class-II aminoacyl-tRNA synthetase family. In terms of assembly, homodimer.

The protein resides in the cytoplasm. It carries out the reaction tRNA(His) + L-histidine + ATP = L-histidyl-tRNA(His) + AMP + diphosphate + H(+). The protein is Histidine--tRNA ligase of Synechococcus sp. (strain RCC307).